We begin with the raw amino-acid sequence, 887 residues long: Alanine--tRNA ligase (887 aa).

Zn(2+) is bound by residues histidine 564, histidine 568, cysteine 675, and histidine 679. Gly residues predominate over residues 851–866 (GQGGGGRPDMAQGGGP). The tract at residues 851 to 871 (GQGGGGRPDMAQGGGPDGDKA) is disordered.

This sequence belongs to the class-II aminoacyl-tRNA synthetase family. The cofactor is Zn(2+).

Its subcellular location is the cytoplasm. The catalysed reaction is tRNA(Ala) + L-alanine + ATP = L-alanyl-tRNA(Ala) + AMP + diphosphate. Functionally, catalyzes the attachment of alanine to tRNA(Ala) in a two-step reaction: alanine is first activated by ATP to form Ala-AMP and then transferred to the acceptor end of tRNA(Ala). Also edits incorrectly charged Ser-tRNA(Ala) and Gly-tRNA(Ala) via its editing domain. The sequence is that of Alanine--tRNA ligase from Rhizorhabdus wittichii (strain DSM 6014 / CCUG 31198 / JCM 15750 / NBRC 105917 / EY 4224 / RW1) (Sphingomonas wittichii).